A 219-amino-acid chain; its full sequence is Large ribosomal subunit protein uL3 (219 aa).

It belongs to the universal ribosomal protein uL3 family. In terms of assembly, part of the 50S ribosomal subunit. Forms a cluster with proteins L14 and L19.

Its function is as follows. One of the primary rRNA binding proteins, it binds directly near the 3'-end of the 23S rRNA, where it nucleates assembly of the 50S subunit. This Salinispora tropica (strain ATCC BAA-916 / DSM 44818 / JCM 13857 / NBRC 105044 / CNB-440) protein is Large ribosomal subunit protein uL3.